The sequence spans 139 residues: Putative pre-16S rRNA nuclease (139 aa).

The protein belongs to the YqgF nuclease family.

The protein resides in the cytoplasm. Functionally, could be a nuclease involved in processing of the 5'-end of pre-16S rRNA. This chain is Putative pre-16S rRNA nuclease, found in Streptococcus pyogenes serotype M49 (strain NZ131).